A 185-amino-acid polypeptide reads, in one-letter code: Hypoxanthine/guanine phosphoribosyltransferase (185 aa).

Belongs to the purine/pyrimidine phosphoribosyltransferase family. Archaeal HPRT subfamily. As to quaternary structure, homodimer.

It is found in the cytoplasm. The enzyme catalyses IMP + diphosphate = hypoxanthine + 5-phospho-alpha-D-ribose 1-diphosphate. It catalyses the reaction GMP + diphosphate = guanine + 5-phospho-alpha-D-ribose 1-diphosphate. It participates in purine metabolism; IMP biosynthesis via salvage pathway; IMP from hypoxanthine: step 1/1. In terms of biological role, catalyzes a salvage reaction resulting in the formation of IMP that is energically less costly than de novo synthesis. This Aciduliprofundum boonei (strain DSM 19572 / T469) protein is Hypoxanthine/guanine phosphoribosyltransferase.